The following is a 368-amino-acid chain: UDP-N-acetylglucosamine--N-acetylmuramyl-(pentapeptide) pyrophosphoryl-undecaprenol N-acetylglucosamine transferase (368 aa).

Residues 13–15, Asn124, Arg167, Ser195, and Gln296 contribute to the UDP-N-acetyl-alpha-D-glucosamine site; that span reads TGG.

The protein belongs to the glycosyltransferase 28 family. MurG subfamily.

Its subcellular location is the cell inner membrane. It catalyses the reaction di-trans,octa-cis-undecaprenyl diphospho-N-acetyl-alpha-D-muramoyl-L-alanyl-D-glutamyl-meso-2,6-diaminopimeloyl-D-alanyl-D-alanine + UDP-N-acetyl-alpha-D-glucosamine = di-trans,octa-cis-undecaprenyl diphospho-[N-acetyl-alpha-D-glucosaminyl-(1-&gt;4)]-N-acetyl-alpha-D-muramoyl-L-alanyl-D-glutamyl-meso-2,6-diaminopimeloyl-D-alanyl-D-alanine + UDP + H(+). Its pathway is cell wall biogenesis; peptidoglycan biosynthesis. In terms of biological role, cell wall formation. Catalyzes the transfer of a GlcNAc subunit on undecaprenyl-pyrophosphoryl-MurNAc-pentapeptide (lipid intermediate I) to form undecaprenyl-pyrophosphoryl-MurNAc-(pentapeptide)GlcNAc (lipid intermediate II). This Maricaulis maris (strain MCS10) (Caulobacter maris) protein is UDP-N-acetylglucosamine--N-acetylmuramyl-(pentapeptide) pyrophosphoryl-undecaprenol N-acetylglucosamine transferase.